Here is a 418-residue protein sequence, read N- to C-terminus: MRPKSWGWISMSERLEGKRVRIKAKGKIFEGIVMPSFTGNFVLKLDNGYNVGFKEYELLEVLEVEPFEPHLPELVKREGLPDVKIISTGGTIASKVDYRTGAVTSQFTAEEIASEVPELTEICNVDAELLYNILSENMKPENWIELARHVYKALKDHEGVIITHGTDTMHFSAAALSFMLSTPKPVVFVGAQRSSDRPSSDAAMNLLCAAKAATEDIGEVVVCMHGSTSDDYCLVHRGVKVRKNHTSRRDAFQSVNAKPIGRIDYPSLSVEWLSWRYRRGERELKLTDRLERKVVLIKFFPGLSSDILEYYHSKGYRGFVIEGTGLGHVSTDWIDTLRRVCEDSVVVMTSQCLWGRVCDRVYDTGRDILRAGVIEGEDMLPEVALIKLMWLLGNYSIEEAKEMVKKSVAGEIEPTTQY.

An Asparaginase/glutaminase domain is found at 81–407 (PDVKIISTGG…EEAKEMVKKS (327 aa)). Active-site residues include T91, T166, D167, and K243.

The protein belongs to the asparaginase 1 family. GatD subfamily. In terms of assembly, heterodimer of GatD and GatE.

It carries out the reaction L-glutamyl-tRNA(Gln) + L-glutamine + ATP + H2O = L-glutaminyl-tRNA(Gln) + L-glutamate + ADP + phosphate + H(+). Allows the formation of correctly charged Gln-tRNA(Gln) through the transamidation of misacylated Glu-tRNA(Gln) in organisms which lack glutaminyl-tRNA synthetase. The reaction takes place in the presence of glutamine and ATP through an activated gamma-phospho-Glu-tRNA(Gln). The GatDE system is specific for glutamate and does not act on aspartate. The sequence is that of Glutamyl-tRNA(Gln) amidotransferase subunit D from Archaeoglobus fulgidus (strain ATCC 49558 / DSM 4304 / JCM 9628 / NBRC 100126 / VC-16).